A 911-amino-acid chain; its full sequence is Nitrate reductase [NADH], clone PBNBR1405 (911 aa).

A disordered region spans residues 1–68 (MATSVDNRHY…RFDSSDDEDE (68 aa)). A compositionally biased stretch (basic and acidic residues) spans 49–62 (KSVDKTTKEDRFDS). Residue Cys191 coordinates Mo-molybdopterin. The Cytochrome b5 heme-binding domain occupies 539-614 (SKMYSMSEVR…LEDYRIGELI (76 aa)). Heme contacts are provided by His574 and His597. The 113-residue stretch at 654–766 (REKVPVKLIE…KGPLGHIEYQ (113 aa)) folds into the FAD-binding FR-type domain. FAD is bound by residues 706-709 (RAYT), 723-727 (VIKVY), Phe728, Phe735, 740-742 (LMS), and Thr793.

Belongs to the nitrate reductase family. In terms of assembly, homodimer. FAD is required as a cofactor. It depends on heme as a cofactor. Requires Mo-molybdopterin as cofactor.

The catalysed reaction is nitrite + NAD(+) + H2O = nitrate + NADH + H(+). Its function is as follows. Nitrate reductase is a key enzyme involved in the first step of nitrate assimilation in plants, fungi and bacteria. The protein is Nitrate reductase [NADH], clone PBNBR1405 (NIA1) of Brassica napus (Rape).